A 327-amino-acid polypeptide reads, in one-letter code: Cyclin-A3-3 (327 aa).

Belongs to the cyclin family. Cyclin AB subfamily.

In Arabidopsis thaliana (Mouse-ear cress), this protein is Cyclin-A3-3 (CYCA3-3).